Reading from the N-terminus, the 174-residue chain is FMN reductase (NADH) RutF (174 aa).

The protein belongs to the non-flavoprotein flavin reductase family. RutF subfamily.

The catalysed reaction is FMNH2 + NAD(+) = FMN + NADH + 2 H(+). Its function is as follows. Catalyzes the reduction of FMN to FMNH2 which is used to reduce pyrimidine by RutA via the Rut pathway. This chain is FMN reductase (NADH) RutF, found in Stutzerimonas stutzeri (strain A1501) (Pseudomonas stutzeri).